Here is a 352-residue protein sequence, read N- to C-terminus: S-adenosylmethionine:tRNA ribosyltransferase-isomerase (352 aa).

Belongs to the QueA family. Monomer.

It localises to the cytoplasm. The enzyme catalyses 7-aminomethyl-7-carbaguanosine(34) in tRNA + S-adenosyl-L-methionine = epoxyqueuosine(34) in tRNA + adenine + L-methionine + 2 H(+). It participates in tRNA modification; tRNA-queuosine biosynthesis. In terms of biological role, transfers and isomerizes the ribose moiety from AdoMet to the 7-aminomethyl group of 7-deazaguanine (preQ1-tRNA) to give epoxyqueuosine (oQ-tRNA). This chain is S-adenosylmethionine:tRNA ribosyltransferase-isomerase, found in Vibrio cholerae serotype O1 (strain ATCC 39541 / Classical Ogawa 395 / O395).